Reading from the N-terminus, the 413-residue chain is Na(+)/H(+) antiporter NhaA (413 aa).

Transmembrane regions (helical) follow at residues 15-35 (LESG…ALFV), 57-77 (LLHW…GLEI), 93-113 (ALPC…YASL), 123-143 (GWAI…SLLG), 152-172 (IFLA…IAVF), 175-195 (AELN…LLGF), 211-231 (VALW…GVVL), 261-281 (WVAF…SFAG), 295-315 (VALG…WLAI), 333-353 (GVSL…LLAF), and 364-384 (VGVL…LSLT).

This sequence belongs to the NhaA Na(+)/H(+) (TC 2.A.33) antiporter family.

It is found in the cell inner membrane. The enzyme catalyses Na(+)(in) + 2 H(+)(out) = Na(+)(out) + 2 H(+)(in). Functionally, na(+)/H(+) antiporter that extrudes sodium in exchange for external protons. The chain is Na(+)/H(+) antiporter NhaA from Caulobacter vibrioides (strain ATCC 19089 / CIP 103742 / CB 15) (Caulobacter crescentus).